The primary structure comprises 240 residues: Urease accessory protein UreF (240 aa).

This sequence belongs to the UreF family. As to quaternary structure, ureD, UreF and UreG form a complex that acts as a GTP-hydrolysis-dependent molecular chaperone, activating the urease apoprotein by helping to assemble the nickel containing metallocenter of UreC. The UreE protein probably delivers the nickel.

The protein localises to the cytoplasm. Required for maturation of urease via the functional incorporation of the urease nickel metallocenter. In Bradyrhizobium sp. (strain ORS 278), this protein is Urease accessory protein UreF.